A 101-amino-acid polypeptide reads, in one-letter code: Small ribosomal subunit protein uS14 (101 aa).

The tract at residues 1 to 20 (MAKTSAVNRNKMRERMASRD) is disordered. Residues 11 to 20 (KMRERMASRD) show a composition bias toward basic and acidic residues.

Belongs to the universal ribosomal protein uS14 family. As to quaternary structure, part of the 30S ribosomal subunit. Contacts proteins S3 and S10.

Its function is as follows. Binds 16S rRNA, required for the assembly of 30S particles and may also be responsible for determining the conformation of the 16S rRNA at the A site. The sequence is that of Small ribosomal subunit protein uS14 from Granulibacter bethesdensis (strain ATCC BAA-1260 / CGDNIH1).